The sequence spans 650 residues: Phosphatidylinositol-3,5-bisphosphate 3-phosphatase MTMR14 (650 aa).

Residues 1-27 (MAGARAAAAAASAGSSASSGNQPPQEL) form a disordered region. Lys194 is subject to N6-acetyllysine. Asn226 carries an N-linked (GlcNAc...) asparagine glycan. Residue Cys330 is the Phosphocysteine intermediate of the active site. The a 1,2-diacyl-sn-glycero-3-phospho-(1D-myo-inositol-3,5-bisphosphate) site is built by Gly333, Trp334, Asp335, Arg336, and Arg382. A 1,2-diacyl-sn-glycero-3-phospho-(1D-myo-inositol-3-phosphate) contacts are provided by Gly333, Trp334, Asp335, Arg336, and Arg382. The interval 476–546 (AAWRKSHSSS…PRSVDHPLPG (71 aa)) is disordered. A Phosphoserine modification is found at Ser518. Asn519 is a glycosylation site (N-linked (GlcNAc...) asparagine). Phosphoserine is present on residues Ser530, Ser580, and Ser624. Arg638 is modified (omega-N-methylarginine).

Belongs to the protein-tyrosine phosphatase family. Non-receptor class myotubularin subfamily. In terms of tissue distribution, expressed in various tissues, including heart, skeletal muscle, placenta, liver, lung, kidney and pancreas.

Its subcellular location is the cytoplasm. The enzyme catalyses a 1,2-diacyl-sn-glycero-3-phospho-(1D-myo-inositol-3,5-bisphosphate) + H2O = a 1,2-diacyl-sn-glycero-3-phospho-(1D-myo-inositol-5-phosphate) + phosphate. It carries out the reaction a 1,2-diacyl-sn-glycero-3-phospho-(1D-myo-inositol-3-phosphate) + H2O = a 1,2-diacyl-sn-glycero-3-phospho-(1D-myo-inositol) + phosphate. Lipid phosphatase that specifically dephosphorylates the D-3 position of phosphatidylinositol 3-phosphate and phosphatidylinositol 3,5-bisphosphate, generating phosphatidylinositol and phosphatidylinositol 5-phosphate. This is Phosphatidylinositol-3,5-bisphosphate 3-phosphatase MTMR14 from Homo sapiens (Human).